The sequence spans 104 residues: Cell division topological specificity factor (104 aa).

The protein belongs to the MinE family.

Prevents the cell division inhibition by proteins MinC and MinD at internal division sites while permitting inhibition at polar sites. This ensures cell division at the proper site by restricting the formation of a division septum at the midpoint of the long axis of the cell. This Sorangium cellulosum (strain So ce56) (Polyangium cellulosum (strain So ce56)) protein is Cell division topological specificity factor.